Consider the following 258-residue polypeptide: Hydroxyethylthiazole kinase (258 aa).

M37 contributes to the substrate binding site. Residues R112 and T158 each contribute to the ATP site. A185 lines the substrate pocket.

This sequence belongs to the Thz kinase family. The cofactor is Mg(2+).

The catalysed reaction is 5-(2-hydroxyethyl)-4-methylthiazole + ATP = 4-methyl-5-(2-phosphooxyethyl)-thiazole + ADP + H(+). Its pathway is cofactor biosynthesis; thiamine diphosphate biosynthesis; 4-methyl-5-(2-phosphoethyl)-thiazole from 5-(2-hydroxyethyl)-4-methylthiazole: step 1/1. In terms of biological role, catalyzes the phosphorylation of the hydroxyl group of 4-methyl-5-beta-hydroxyethylthiazole (THZ). The sequence is that of Hydroxyethylthiazole kinase from Rhizobium etli (strain ATCC 51251 / DSM 11541 / JCM 21823 / NBRC 15573 / CFN 42).